Here is a 61-residue protein sequence, read N- to C-terminus: Transcription elongation factor Spt4 (61 aa).

Residues Cys6, Cys9, Cys18, and Cys21 each coordinate Zn(2+).

The protein belongs to the archaeal Spt4 family. Heterodimer composed of Spt4 and Spt5.

Functionally, stimulates transcription elongation. In Pyrococcus furiosus (strain ATCC 43587 / DSM 3638 / JCM 8422 / Vc1), this protein is Transcription elongation factor Spt4.